A 100-amino-acid chain; its full sequence is Small ribosomal subunit protein uS14 (100 aa).

It belongs to the universal ribosomal protein uS14 family. Part of the 30S ribosomal subunit. Contacts proteins S3 and S10.

Its function is as follows. Binds 16S rRNA, required for the assembly of 30S particles and may also be responsible for determining the conformation of the 16S rRNA at the A site. The sequence is that of Small ribosomal subunit protein uS14 from Trichormus variabilis (strain ATCC 29413 / PCC 7937) (Anabaena variabilis).